We begin with the raw amino-acid sequence, 396 residues long: NADH-quinone oxidoreductase subunit D 1 (396 aa).

Belongs to the complex I 49 kDa subunit family. NDH-1 is composed of 14 different subunits. Subunits NuoB, C, D, E, F, and G constitute the peripheral sector of the complex.

It localises to the cell inner membrane. The catalysed reaction is a quinone + NADH + 5 H(+)(in) = a quinol + NAD(+) + 4 H(+)(out). Functionally, NDH-1 shuttles electrons from NADH, via FMN and iron-sulfur (Fe-S) centers, to quinones in the respiratory chain. The immediate electron acceptor for the enzyme in this species is believed to be ubiquinone. Couples the redox reaction to proton translocation (for every two electrons transferred, four hydrogen ions are translocated across the cytoplasmic membrane), and thus conserves the redox energy in a proton gradient. In Rhizobium meliloti (strain 1021) (Ensifer meliloti), this protein is NADH-quinone oxidoreductase subunit D 1.